The sequence spans 198 residues: Recombination protein RecR (198 aa).

A C4-type zinc finger spans residues 56-71 (CGVCGNVDTSNPCGIC). A Toprim domain is found at 79-174 (RSICVVEEVA…RVTQLAHGLP (96 aa)).

The protein belongs to the RecR family.

Functionally, may play a role in DNA repair. It seems to be involved in an RecBC-independent recombinational process of DNA repair. It may act with RecF and RecO. In Novosphingobium aromaticivorans (strain ATCC 700278 / DSM 12444 / CCUG 56034 / CIP 105152 / NBRC 16084 / F199), this protein is Recombination protein RecR.